The following is a 64-amino-acid chain: Alpha-like toxin Lqh6 (64 aa).

Residues 2–63 form the LCN-type CS-alpha/beta domain; that stretch reads RDGYIAQPEN…GIIVDGVKCH (62 aa). Disulfide bonds link Cys12–Cys62, Cys16–Cys34, Cys20–Cys44, and Cys24–Cys46. Lys64 bears the Lysine amide mark.

The protein belongs to the long (4 C-C) scorpion toxin superfamily. Sodium channel inhibitor family. Alpha subfamily. As to expression, expressed by the venom gland.

It is found in the secreted. In terms of biological role, alpha toxins bind voltage-independently at site-3 of sodium channels (Nav) and inhibit the inactivation of the activated channels, thereby blocking neuronal transmission. This toxin is highly toxic to insects and mice, and inhibits the binding of alpha-toxin to cockroach neuronal membranes. The polypeptide is Alpha-like toxin Lqh6 (Leiurus hebraeus (Hebrew deathstalker scorpion)).